The chain runs to 219 residues: Cytidylate kinase (219 aa).

Residue 11–19 participates in ATP binding; that stretch reads GTAGSGKTA.

This sequence belongs to the cytidylate kinase family. Type 1 subfamily.

The protein localises to the cytoplasm. The catalysed reaction is CMP + ATP = CDP + ADP. It carries out the reaction dCMP + ATP = dCDP + ADP. In Mesoplasma florum (strain ATCC 33453 / NBRC 100688 / NCTC 11704 / L1) (Acholeplasma florum), this protein is Cytidylate kinase.